Consider the following 291-residue polypeptide: ATP synthase gamma chain (291 aa).

The protein belongs to the ATPase gamma chain family. F-type ATPases have 2 components, CF(1) - the catalytic core - and CF(0) - the membrane proton channel. CF(1) has five subunits: alpha(3), beta(3), gamma(1), delta(1), epsilon(1). CF(0) has three main subunits: a, b and c.

The protein localises to the cell inner membrane. Produces ATP from ADP in the presence of a proton gradient across the membrane. The gamma chain is believed to be important in regulating ATPase activity and the flow of protons through the CF(0) complex. The protein is ATP synthase gamma chain of Rhodopseudomonas palustris (strain HaA2).